We begin with the raw amino-acid sequence, 500 residues long: Glycerol kinase (500 aa).

Residue T16 coordinates ADP. T16 and T17 together coordinate ATP. T16 provides a ligand contact to sn-glycerol 3-phosphate. Residue R20 participates in ADP binding. Sn-glycerol 3-phosphate is bound by residues R86, E87, Y138, and D247. Glycerol-binding residues include R86, E87, Y138, D247, and Q248. Positions 269 and 312 each coordinate ADP. The ATP site is built by T269, G312, Q316, and G413. ADP contacts are provided by G413 and N417.

It belongs to the FGGY kinase family.

The enzyme catalyses glycerol + ATP = sn-glycerol 3-phosphate + ADP + H(+). It functions in the pathway polyol metabolism; glycerol degradation via glycerol kinase pathway; sn-glycerol 3-phosphate from glycerol: step 1/1. Its activity is regulated as follows. Inhibited by fructose 1,6-bisphosphate (FBP). Its function is as follows. Key enzyme in the regulation of glycerol uptake and metabolism. Catalyzes the phosphorylation of glycerol to yield sn-glycerol 3-phosphate. The polypeptide is Glycerol kinase (Rippkaea orientalis (strain PCC 8801 / RF-1) (Cyanothece sp. (strain PCC 8801))).